The primary structure comprises 833 residues: Guanine-nucleotide exchange factor YEL1 (833 aa).

Over residues 1–15 the composition is skewed to polar residues; it reads MNNLSSQNIGTSLDF. Disordered stretches follow at residues 1 to 51, 152 to 194, 215 to 246, and 420 to 483; these read MNNL…ASPR, AEAE…ERER, QVKL…EDQE, and NKTN…TSNW. The segment covering 20–34 has biased composition (acidic residues); sequence GEFEEEEEREEDDSS. The span at 172–194 shows a compositional bias: basic and acidic residues; sequence TVEDTKSTGEQDEMTRKTAERER. The SEC7 domain maps to 185-410; the sequence is MTRKTAERER…GVYYEALKYM (226 aa). Positions 230–240 are enriched in low complexity; sequence AAAGRTTAAPE. Residues 420 to 435 are compositionally biased toward basic and acidic residues; the sequence is NKTNVRDSRDSKDTRI. The 149-residue stretch at 548-696 folds into the PH domain; the sequence is GGIFRWITRS…QCVNFWAARL (149 aa).

It belongs to the YEL1 family.

It is found in the cytoplasm. Its subcellular location is the cell membrane. It localises to the bud neck. The protein resides in the bud tip. Guanine nucleotide exchange factor for ARF3 required for localization of ARF3 to the bud neck and tip and involved in actin patch polarization. This Zygosaccharomyces rouxii (strain ATCC 2623 / CBS 732 / NBRC 1130 / NCYC 568 / NRRL Y-229) protein is Guanine-nucleotide exchange factor YEL1 (YEL1).